A 383-amino-acid chain; its full sequence is Opsin Rh4 (383 aa).

Topologically, residues 1–57 (MDIAGSLCNASEGPVLRPEARVSGNGDLQFLGWNVPPDQIQHIPEHWLTQLEPPASM) are extracellular. N-linked (GlcNAc...) asparagine glycosylation is present at N9. The chain crosses the membrane as a helical span at residues 58–82 (HYMLGVFYIFLFCASTVGNGMVIWI). The Cytoplasmic portion of the chain corresponds to 83–94 (FSTSKALRTPSN). Residues 95–117 (MFVLNLAVFDFIMCLKAPIFIYN) form a helical membrane-spanning segment. Topologically, residues 118–133 (SFHRGFALGNTGCQIF) are extracellular. C130 and C207 are disulfide-bonded. The helical transmembrane segment at 134–153 (AAIGSYSGIGAGMTNAAIGY) threads the bilayer. Over 154–171 (DRLNVITKPMNRNMTFTK) the chain is Cytoplasmic. The chain crosses the membrane as a helical span at residues 172–196 (AIIMNVIIWLYCTPWVVLPLTQFWD). Residues 197–220 (RFVPEGYLTSCTFDYLTDNFDTRL) lie on the Extracellular side of the membrane. The helical transmembrane segment at 221–248 (FVGTIFFFSFVCPTLMIIYYYSQIVGHV) threads the bilayer. Over 249–284 (FSHEKALREQAKKMNVESLRSNVDKSKDTAEIRIAK) the chain is Cytoplasmic. A helical membrane pass occupies residues 285-308 (AAITICFLFFVSWTPYGVMSLIGA). Residues 309-316 (FGDKSLLT) are Extracellular-facing. A helical transmembrane segment spans residues 317–341 (PGATMIPACTCKLVACIDPFVYAIS). Position 328 is an N6-(retinylidene)lysine (K328). The Cytoplasmic segment spans residues 342–383 (HPRYRMELQKRCPWLAIDEKAPESSSAASTTTTQEQQQTTAA). The disordered stretch occupies residues 361-383 (KAPESSSAASTTTTQEQQQTTAA). Low complexity predominate over residues 364–383 (ESSSAASTTTTQEQQQTTAA).

It belongs to the G-protein coupled receptor 1 family. Opsin subfamily. Post-translationally, phosphorylated on some or all of the serine and threonine residues present in the C-terminal region.

The protein localises to the membrane. Visual pigments are the light-absorbing molecules that mediate vision. They consist of an apoprotein, opsin, covalently linked to cis-retinal. The polypeptide is Opsin Rh4 (Rh4) (Drosophila virilis (Fruit fly)).